Consider the following 95-residue polypeptide: MKLNREDVLHIARLARLGLEEDEINRLSKELSALLEHFEVLQQVDTTGVEPTSQSTPVKSVLKEDIIKSSYAREDILSNAPRREGDYVRIRVVME.

The protein belongs to the GatC family. Heterotrimer of A, B and C subunits.

The enzyme catalyses L-glutamyl-tRNA(Gln) + L-glutamine + ATP + H2O = L-glutaminyl-tRNA(Gln) + L-glutamate + ADP + phosphate + H(+). It catalyses the reaction L-aspartyl-tRNA(Asn) + L-glutamine + ATP + H2O = L-asparaginyl-tRNA(Asn) + L-glutamate + ADP + phosphate + 2 H(+). In terms of biological role, allows the formation of correctly charged Asn-tRNA(Asn) or Gln-tRNA(Gln) through the transamidation of misacylated Asp-tRNA(Asn) or Glu-tRNA(Gln) in organisms which lack either or both of asparaginyl-tRNA or glutaminyl-tRNA synthetases. The reaction takes place in the presence of glutamine and ATP through an activated phospho-Asp-tRNA(Asn) or phospho-Glu-tRNA(Gln). The polypeptide is Aspartyl/glutamyl-tRNA(Asn/Gln) amidotransferase subunit C (Dehalococcoides mccartyi (strain CBDB1)).